The following is a 692-amino-acid chain: UvrABC system protein C (692 aa).

The 80-residue stretch at 16 to 95 folds into the GIY-YIG domain; sequence ETPGVYRFRD…IKEFDPRFNV (80 aa). Residues 208-243 enclose the UVR domain; it reads GRYLRRLEREMRAAAEAQEYERAARLRDDIGALRRA. Residues 492 to 511 are disordered; that stretch reads GELEEYPGAPTGDDEAPETG.

Belongs to the UvrC family. In terms of assembly, interacts with UvrB in an incision complex.

The protein localises to the cytoplasm. Its function is as follows. The UvrABC repair system catalyzes the recognition and processing of DNA lesions. UvrC both incises the 5' and 3' sides of the lesion. The N-terminal half is responsible for the 3' incision and the C-terminal half is responsible for the 5' incision. This is UvrABC system protein C from Parafrankia sp. (strain EAN1pec).